A 298-amino-acid chain; its full sequence is Probable phosphite transport system-binding protein HtxB (298 aa).

An N-terminal signal peptide occupies residues 1-33 (MQVFTLFSKFKKALTRAILAFIATIIVCTPAQA).

The protein belongs to the phosphate/phosphite/phosphonate binding protein family.

Probably forms part of a binding-protein-dependent hypophosphite transporter. In Stutzerimonas stutzeri (Pseudomonas stutzeri), this protein is Probable phosphite transport system-binding protein HtxB (htxB).